The chain runs to 189 residues: Auxin-responsive protein IAA3 (189 aa).

Residues 12–16 carry the EAR-like (transcriptional repression) motif; sequence LRLGL. The tract at residues 42–65 is disordered; it reads TDTEKEIESSSRKTETSPPRKAQI. Residues 43 to 56 are compositionally biased toward basic and acidic residues; it reads DTEKEIESSSRKTE. Residues 92–179 form the PB1 domain; that stretch reads GIYVKVSMDG…TCKRLRIMKG (88 aa).

It belongs to the Aux/IAA family. In terms of assembly, homodimers and heterodimers. Interacts with TPL. Interacts with TIR1, the F-box component of the Skp1-Cdc53/cullin-F-box (SCFTIR1) E3 ubiquitin ligase complex. Post-translationally, phosphorylated by phytochrome A in vitro. As to expression, highly expressed in stems and flowers. Expressed in hypocotyls, cotyledons and leaves, but barely detected in roots. Expressed in root tips. In the root meristem, specifically detected at the vascular tissue transition zone.

Its subcellular location is the nucleus. Its function is as follows. Aux/IAA proteins are short-lived transcriptional factors that function as repressors of early auxin response genes at low auxin concentrations. Repression is thought to result from the interaction with auxin response factors (ARFs), proteins that bind to the auxin-responsive promoter element (AuxRE). Plays a central role in auxin regulation of root growth, in gravitropism, and in lateral root formation. Regulated by an auxin-induced protein turnover. Formation of heterodimers with ARF proteins may alter their ability to modulate early auxin response genes expression. When activated by cytokinin, restricts the expression of the PIN genes to the vascular transition zone. Induction of SHY2 in the vascular transition zone restricts BRX expression to down-regulate PIN3 and thus limit meristem growth, but proper SHY2 expression requires BRX. Involved in meristem growth and in determining its size. May participate in strigolactone signaling to regulate meristem size and lateral root formation. The sequence is that of Auxin-responsive protein IAA3 (IAA3) from Arabidopsis thaliana (Mouse-ear cress).